A 244-amino-acid polypeptide reads, in one-letter code: 5-oxoprolinase subunit A (244 aa).

It belongs to the LamB/PxpA family. In terms of assembly, forms a complex composed of PxpA, PxpB and PxpC.

It catalyses the reaction 5-oxo-L-proline + ATP + 2 H2O = L-glutamate + ADP + phosphate + H(+). In terms of biological role, catalyzes the cleavage of 5-oxoproline to form L-glutamate coupled to the hydrolysis of ATP to ADP and inorganic phosphate. This chain is 5-oxoprolinase subunit A, found in Salmonella heidelberg (strain SL476).